The following is a 154-amino-acid chain: Urease accessory protein UreE (154 aa).

It belongs to the UreE family.

Its subcellular location is the cytoplasm. Functionally, involved in urease metallocenter assembly. Binds nickel. Probably functions as a nickel donor during metallocenter assembly. The polypeptide is Urease accessory protein UreE (Prochlorococcus marinus subsp. pastoris (strain CCMP1986 / NIES-2087 / MED4)).